The following is a 144-amino-acid chain: Maximins 4/H3 type 2 (144 aa).

Residues 1-18 (MNFKYIIAVSFFIASAYA) form the signal peptide. The propeptide occupies 19–43 (RRNEKDVQSLSQRDVLEEESLREIR). Asparagine 70 carries the asparagine amide modification. Residues 74-123 (TAEDHEVMKRLEAVMRDLDSLDHPEEASERETRGFNQEEIANLFTKKEKR) constitute a propeptide that is removed on maturation. At isoleucine 143 the chain carries Isoleucine amide.

Belongs to the bombinin family. In terms of tissue distribution, expressed by the skin glands.

The protein resides in the secreted. Functionally, maximin-4 shows antibacterial activity against both Gram-positive and Gram-negative bacteria. It also shows antimicrobial activity against the fungus C.albicans, but not against A.flavus nor P.uticale. It has little hemolytic activity. It does not possess a significant cytotoxicity against tumor cell lines. It does not possess a significant anti-HIV activity. Maximin-H3 shows antibacterial activity against both Gram-positive and Gram-negative bacteria. It also shows antimicrobial activity against the fungus C.albicans. Shows strong hemolytic activity. The chain is Maximins 4/H3 type 2 from Bombina maxima (Giant fire-bellied toad).